Reading from the N-terminus, the 267-residue chain is L-aspartate dehydrogenase (267 aa).

Residues Ala124 and Asn190 each coordinate NAD(+). His220 is a catalytic residue.

The protein belongs to the L-aspartate dehydrogenase family.

It carries out the reaction L-aspartate + NADP(+) + H2O = oxaloacetate + NH4(+) + NADPH + H(+). The catalysed reaction is L-aspartate + NAD(+) + H2O = oxaloacetate + NH4(+) + NADH + H(+). The protein operates within cofactor biosynthesis; NAD(+) biosynthesis; iminoaspartate from L-aspartate (dehydrogenase route): step 1/1. Its function is as follows. Specifically catalyzes the NAD or NADP-dependent dehydrogenation of L-aspartate to iminoaspartate. The sequence is that of L-aspartate dehydrogenase from Polaromonas sp. (strain JS666 / ATCC BAA-500).